A 134-amino-acid polypeptide reads, in one-letter code: Profilin-4 (134 aa).

A disulfide bridge connects residues Cys13 and Cys118. The Involved in PIP2 interaction motif lies at 84-100 (AVIRGKKGSGGITIKKT). Position 114 is a phosphothreonine (Thr114).

This sequence belongs to the profilin family. In terms of assembly, occurs in many kinds of cells as a complex with monomeric actin in a 1:1 ratio. Phosphorylated by MAP kinases.

Its subcellular location is the cytoplasm. It is found in the cytoskeleton. Its function is as follows. Binds to actin and affects the structure of the cytoskeleton. At high concentrations, profilin prevents the polymerization of actin, whereas it enhances it at low concentrations. The chain is Profilin-4 from Olea europaea (Common olive).